The sequence spans 551 residues: Palmdelphin (551 aa).

The residue at position 1 (Met1) is an N-acetylmethionine. Residues 12 to 106 adopt a coiled-coil conformation; it reads QAITDKRKIQ…LQISTKEEAI (95 aa). Residue Lys125 forms a Glycyl lysine isopeptide (Lys-Gly) (interchain with G-Cter in SUMO2) linkage. At Ser135 the chain carries Phosphoserine. Lys179 is covalently cross-linked (Glycyl lysine isopeptide (Lys-Gly) (interchain with G-Cter in SUMO1); alternate). Lys179 participates in a covalent cross-link: Glycyl lysine isopeptide (Lys-Gly) (interchain with G-Cter in SUMO2); alternate. A compositionally biased stretch (basic and acidic residues) spans 248-259; that stretch reads ERNSKSPTEYHE. The segment at 248–280 is disordered; it reads ERNSKSPTEYHEPVYANPFYRPTTPQRETVTPG. The span at 270 to 280 shows a compositional bias: polar residues; the sequence is TTPQRETVTPG. Thr271 is modified (phosphothreonine). Phosphoserine occurs at positions 321, 370, 384, and 385. Disordered regions lie at residues 342–392 and 449–535; these read TPQK…QEDE and DEEE…EDPS. Residues 484–495 are compositionally biased toward basic and acidic residues; it reads KRSEASPHENTN. 3 positions are modified to phosphoserine: Ser498, Ser515, and Ser520.

Belongs to the paralemmin family. As to quaternary structure, interacts with GLUL. Post-translationally, phosphorylated. In terms of tissue distribution, ubiquitous. Most abundant in cardiac and skeletal muscle.

It localises to the cytoplasm. It is found in the cell projection. The protein resides in the dendrite. The protein localises to the dendritic spine. In Homo sapiens (Human), this protein is Palmdelphin (PALMD).